A 1075-amino-acid polypeptide reads, in one-letter code: mRNA-binding protein PUF2 (1075 aa).

Positions 38 to 68 are disordered; the sequence is NTNARSVRVSDKRGRSSSTSPQKIGSYRTRA. Serine 72 carries the phosphoserine modification. Low complexity predominate over residues 93–105; that stretch reads TPVVVVPPTSSTP. Positions 93 to 112 are disordered; that stretch reads TPVVVVPPTSSTPDSLNSTT. At serine 198 the chain carries Phosphoserine. The region spanning 316–402 is the RRM domain; it reads NTISISNVFP…APSTVSFARV (87 aa). The 362-residue stretch at 511–872 folds into the PUM-HD domain; the sequence is ELNHLLQNAL…QLLEEVGLSS (362 aa). Pumilio repeat units lie at residues 574-611, 612-647, 649-683, 684-719, 722-758, and 760-800; these read AIVM…IMLR, KCNK…NLVT, GVSD…FIFE, SVLS…QLLT, SLII…LILC, and KLVN…KIIH. Phosphoserine is present on residues serine 872 and serine 876. Disordered regions lie at residues 874–931 and 997–1075; these read GISP…LNFN and NNYN…SYGY. 3 stretches are compositionally biased toward low complexity: residues 901-916, 997-1009, and 1018-1063; these read VSVS…HNSV, NNYN…SQMN, and NNNN…NNNN.

It localises to the cytoplasm. In terms of biological role, RNA-binding protein involved in post-transcriptional regulation. Negatively regulates expression of COX17 by binding to the 3'-UTR of COX17 mRNA. Promotes decay of COX17 mRNA by enhancing its rate of deadenylation and subsequent turnover. Predominantly binds to mRNAs encoding membrane-associated proteins with roles in transmembrane transport and vesicular trafficking. This Saccharomyces cerevisiae (strain ATCC 204508 / S288c) (Baker's yeast) protein is mRNA-binding protein PUF2 (PUF2).